The sequence spans 269 residues: MNIDMNWLGQLLGSDWEIFPAGGATGDAYYAKHNGQQLFLKRNSSPFLAVLSAEGIVPKLVWTKRMENGDVITAQHWMTGRELKPKDMSGRPVAELLRKIHTSKALLDMLKRLGKEPLNPGALLSQLKQAVFAVQQSSPLIQEGIKYLEEHLHEVHFGEKVVCHCDVNHNNWLLSEDNQLYLIDWDGAMIADPAMDLGPLLYHYVEKPAWESWLSMYGIELTESLRLRMAWYVLSETITFIAWHKAKGNDKEFHDAMEELHILMKRIVD.

Residues Phe-39, His-76, Trp-77, Met-78, and Gly-80 each coordinate ATP. A Brenner's motif [HXDhX3N] motif is present at residues 164–171; sequence HCDVNHNN. Residue Asp-166 is the Proton acceptor of the active site. The APH signature appears at 180 to 203; sequence LYLIDWDGAMIADPAMDLGPLLYH.

This sequence belongs to the aminoglycoside phosphotransferase family. In terms of assembly, monomer in solution. Interacts with DnaA (via domains I (1-82) and III (111-326)). Interacts with DnaB. Interacts with FtsZ.

The protein resides in the cytoplasm. It carries out the reaction D-ribose + ATP = D-ribose 5-phosphate + ADP + H(+). It catalyses the reaction 2-deoxy-D-ribose + ATP = 2-deoxy-D-ribose 5-phosphate + ADP + H(+). Activated by D-ribose and 2-deoxy-D-ribose. Slightly activated by kanamycin and gentamicin. Its function is as follows. Plays a role in cell cycle regulation and chromosome integrity. Activates DnaA-dependent chromosomal DNA replication initiation ensuring that the chromosome is replicated at the right time during the cell cycle. May regulate replication initiation through phosphorylation of a possible second messenger or metabolite, and by interacting with replication initiation proteins. Has ATPase activity with D-ribose and 2-deoxy-D-ribose in vitro, but not with choline. Involved in DNA damage response. In Bacillus subtilis (strain 168), this protein is Cell cycle regulator CcrZ.